Consider the following 183-residue polypeptide: Adenine phosphoribosyltransferase (183 aa).

It belongs to the purine/pyrimidine phosphoribosyltransferase family. Homodimer.

It is found in the cytoplasm. It catalyses the reaction AMP + diphosphate = 5-phospho-alpha-D-ribose 1-diphosphate + adenine. It participates in purine metabolism; AMP biosynthesis via salvage pathway; AMP from adenine: step 1/1. Its function is as follows. Catalyzes a salvage reaction resulting in the formation of AMP, that is energically less costly than de novo synthesis. The chain is Adenine phosphoribosyltransferase from Shewanella halifaxensis (strain HAW-EB4).